Here is a 333-residue protein sequence, read N- to C-terminus: Procathepsin L (333 aa).

The signal sequence occupies residues 1 to 17 (MNPTFILAALCLGIASA). The propeptide at 18–113 (TLTFNHSLEA…KVFQEPLFYE (96 aa)) is activation peptide. Residue glutamate 122 coordinates Zn(2+). Cystine bridges form between cysteine 135–cysteine 178 and cysteine 169–cysteine 211. Cysteine 138 is a catalytic residue. Zn(2+) is bound by residues glutamate 163, aspartate 184, glutamate 199, glutamate 205, glutamate 209, aspartate 227, aspartate 250, histidine 253, aspartate 273, and aspartate 275. The cysteines at positions 269 and 322 are disulfide-linked. Histidine 276 is an active-site residue. A propeptide spanning residues 289–291 (ESD) is cleaved from the precursor. Asparagine 300 is a catalytic residue.

The protein belongs to the peptidase C1 family. Dimer of a heavy and a light chain linked by disulfide bonds. Interacts with Long isoform of CD74/Ii chain; the interaction stabilizes the conformation of mature CTSL. Post-translationally, during export along the endocytic pathway, pro-CTSL undergoes several proteolytic cleavages to generate the CTSL single-chain and two-chain mature forms, composed of a heavy chain linked to a light chain by disulfide bonds. Autocleavage; produces the single-chain CTSL after cleavage of the propeptide. The cleavage can be intermolecular.

Its subcellular location is the lysosome. The protein localises to the apical cell membrane. The protein resides in the cytoplasmic vesicle. It is found in the secretory vesicle. It localises to the chromaffin granule. Its subcellular location is the secreted. The protein localises to the extracellular space. It catalyses the reaction Specificity close to that of papain. As compared to cathepsin B, cathepsin L exhibits higher activity toward protein substrates, but has little activity on Z-Arg-Arg-NHMec, and no peptidyl-dipeptidase activity.. Its activity is regulated as follows. Inhibited by the propeptide produced by autocleavage. Long isoform of CD74/Ii chain stabilizes the conformation of mature CTSL by binding to its active site and serving as a chaperone to help maintain a pool of mature enzyme in endocytic compartments and extracellular space of APCs. IFNG enhances the conversion into the CTSL mature and active form. Inhibited by CST6. Inhibited by the glycopeptide antibiotic teicoplanin. Inhibited by amantadine. Its function is as follows. Thiol protease important for the overall degradation of proteins in lysosomes. Plays a critical for normal cellular functions such as general protein turnover, antigen processing and bone remodeling. Involved in the solubilization of cross-linked TG/thyroglobulin and in the subsequent release of thyroid hormone thyroxine (T4) by limited proteolysis of TG/thyroglobulin in the thyroid follicle lumen. In neuroendocrine chromaffin cells secretory vesicles, catalyzes the prohormone proenkephalin processing to the active enkephalin peptide neurotransmitter. In thymus, regulates CD4(+) T cell positive selection by generating the major histocompatibility complex class II (MHCII) bound peptide ligands presented by cortical thymic epithelial cells. Also mediates invariant chain processing in cortical thymic epithelial cells. Major elastin-degrading enzyme at neutral pH. Accumulates as a mature and active enzyme in the extracellular space of antigen presenting cells (APCs) to regulate degradation of the extracellular matrix in the course of inflammation. Secreted form generates endostatin from COL18A1. Critical for cardiac morphology and function. Plays an important role in hair follicle morphogenesis and cycling, as well as epidermal differentiation. Required for maximal stimulation of steroidogenesis by TIMP1. This chain is Procathepsin L (CTSL), found in Chlorocebus aethiops (Green monkey).